Consider the following 639-residue polypeptide: MALFHIARYAGPEAAGQGDTDAEAGSRARVLLERLQNRARERQQREPELETTGTAGEGEAAAAGKRRRRPRRRRRVSGSATPNSEAPRAKRRKADKDVDAGRGEEAPEELSAGAEDPGANPQEDVQRPPAPGRVLGDFARRKTPKVQPFLPAWLAKPSCVKKSVTEDLTPIEDIPEVHPDLQKQLRANGITSYFPVQAAVIPALLESADHGFLIGRGGYQPSDLCVSAPTGSGKTLAFVIPVVQALLHRVVCHIRALVVLPTKELAQQVSKVFNIYTDTTPLRVALVTGQKSLAKEQESLVQKTADGFRCLADIVVATPGRLVDHIDQTPGFSLQQLRFLIIDEADRMIDSMHQSWLPRVVAAAFYSEGPTGSCALLQRTQPQALTAASTCVPQMPLQKLLFSATLTQDPEKLQRLGLYQPRLFSTRLGQQSPKDTAEVDENSGKYTFPVGLTHHYVPCRLSSKPLIVLHLVLRMSCSRALCFTNSRENSHRLYLLAQAFGGVSVAEFSSRYGPGQRKKILKQFEQGKIQLLISTDATARGIDVQGVELVINYDAPQYLRTYVHRVGRTARAGKTGQAFTLLLKVQERKFLQMVSEAGVPELTHHEIPRKLLQPLVARYETALSQLEKTVKEEQKLKAA.

Positions 1 to 131 (MALFHIARYA…QEDVQRPPAP (131 aa)) are disordered. Residue A2 is modified to N-acetylalanine. The span at 24–48 (AGSRARVLLERLQNRARERQQREPE) shows a compositional bias: basic and acidic residues. Positions 50-63 (ETTGTAGEGEAAAA) are enriched in low complexity. Residues 64–76 (GKRRRRPRRRRRV) are compositionally biased toward basic residues. Phosphoserine is present on S79. Residues 94-105 (ADKDVDAGRGEE) are compositionally biased toward basic and acidic residues. The Q motif motif lies at 193 to 201 (YFPVQAAVI). The 210-residue stretch at 215–424 (GRGGYQPSDL…RLGLYQPRLF (210 aa)) folds into the Helicase ATP-binding domain. 228 to 235 (APTGSGKT) lines the ATP pocket. Residues 343–346 (DEAD) carry the DEAD box motif. S432 bears the Phosphoserine mark. One can recognise a Helicase C-terminal domain in the interval 467–615 (IVLHLVLRMS…EIPRKLLQPL (149 aa)).

It belongs to the DEAD box helicase family. DDX51/DBP6 subfamily.

The protein localises to the nucleus. It is found in the nucleolus. The catalysed reaction is ATP + H2O = ADP + phosphate + H(+). ATP-binding RNA helicase involved in the biogenesis of 60S ribosomal subunits. The polypeptide is ATP-dependent RNA helicase DDX51 (Ddx51) (Mus musculus (Mouse)).